A 125-amino-acid chain; its full sequence is Holo-[acyl-carrier-protein] synthase (125 aa).

Mg(2+)-binding residues include aspartate 8 and glutamate 57.

Belongs to the P-Pant transferase superfamily. AcpS family. The cofactor is Mg(2+).

The protein localises to the cytoplasm. The enzyme catalyses apo-[ACP] + CoA = holo-[ACP] + adenosine 3',5'-bisphosphate + H(+). Transfers the 4'-phosphopantetheine moiety from coenzyme A to a Ser of acyl-carrier-protein. The sequence is that of Holo-[acyl-carrier-protein] synthase from Dechloromonas aromatica (strain RCB).